Consider the following 391-residue polypeptide: Ectodysplasin-A (391 aa).

Topologically, residues 1-41 (MGYPEVERRELLPAAAPRERGSQGCGCGGAPARAGEGNSCL) are cytoplasmic. The helical; Signal-anchor for type II membrane protein transmembrane segment at 42-62 (LFLGFFGLSLALHLLTLCCYL) threads the bilayer. Topologically, residues 63–391 (ELRSELRRER…AIRLGEAPAS (329 aa)) are extracellular. 2 disordered regions span residues 73–127 (GAES…HSDS) and 146–245 (YSEE…GTRE). Over residues 86 to 101 (TSGTLSSLGGLDPDSP) the composition is skewed to low complexity. A compositionally biased stretch (polar residues) spans 102–113 (ITSHLGQPSPKQ). Residues 180 to 229 (GPPGPNGPPGPPGPPGPQGPPGIPGIPGIPGTTVMGPPGPPGPPGPQGPP) enclose the Collagen-like domain. 2 stretches are compositionally biased toward pro residues: residues 181–203 (PPGP…PGIP) and 216–228 (PPGP…PQGP). Positions 249 to 385 (AVVHLQGQGS…HTTFFGAIRL (137 aa)) constitute a THD domain. N313 is a glycosylation site (N-linked (GlcNAc...) asparagine). The cysteines at positions 332 and 346 are disulfide-linked. An N-linked (GlcNAc...) asparagine glycan is attached at N372.

This sequence belongs to the tumor necrosis factor family. Homotrimer. The homotrimers may then dimerize and form higher-order oligomers. N-glycosylated. Post-translationally, processing by furin produces a secreted form. Not abundant; expressed in specific cell types of ectodermal (but not mesodermal) origin of keratinocytes, hair follicles, sweat glands. Also in adult heart, liver, muscle, pancreas, prostate, fetal liver, uterus, small intestine and umbilical cord.

Its subcellular location is the cell membrane. It is found in the secreted. Cytokine which is involved in epithelial-mesenchymal signaling during morphogenesis of ectodermal organs. Functions as a ligand activating the DEATH-domain containing receptors EDAR and EDA2R. May also play a role in cell adhesion. In terms of biological role, binds only to the receptor EDAR, while isoform 3 binds exclusively to the receptor EDA2R. Its function is as follows. Binds only to the receptor EDA2R. The polypeptide is Ectodysplasin-A (EDA) (Homo sapiens (Human)).